A 196-amino-acid chain; its full sequence is Vacuolar iron transporter homolog 2 (196 aa).

Over 1-31 the chain is Cytoplasmic; that stretch reads MDQSGSNTNMDIEKESTTFDYSKRSQWLRAA. A helical transmembrane segment spans residues 32–52; that stretch reads VLGANDGLVSTASLMMGVGAV. Residues 53-59 are Vacuolar-facing; it reads KHDVKAM. A helical membrane pass occupies residues 60 to 80; it reads ILSGFAGMVAGACSMAIGEFV. At 81-112 the chain is on the cytoplasmic side; that stretch reads SVYSQYDIEVAQMERDSVEIEKEKLPSPMQAA. Residues 113-133 traverse the membrane as a helical segment; it reads AASALAFSAGAIVPLLAAAFV. The Vacuolar portion of the chain corresponds to 134–139; sequence KEYKMR. Residues 140-160 form a helical membrane-spanning segment; that stretch reads IISVVVAVTVALMVFGWLGAA. At 161-172 the chain is on the cytoplasmic side; the sequence is LGKAPAVRSSAR. Residues 173-193 traverse the membrane as a helical segment; the sequence is VLFGGWLAMAVTFGLTKLIGL. Topologically, residues 194-196 are vacuolar; that stretch reads YGL.

This sequence belongs to the CCC1 family. As to expression, expressed in roots, leaves and inflorescences.

It localises to the vacuole membrane. It catalyses the reaction Fe(2+)(in) = Fe(2+)(out). Functionally, vacuolar iron transporter involved in the transfer of iron ions from the cytosol to the vacuole for intracellular iron storage. Involved in regulation of cellular iron homeostasis. Vacuolar iron storage is required for seed embryo and seedling development. In Arabidopsis thaliana (Mouse-ear cress), this protein is Vacuolar iron transporter homolog 2.